Consider the following 125-residue polypeptide: Phosphoribosyl-AMP cyclohydrolase (125 aa).

Asp-74 provides a ligand contact to Mg(2+). A Zn(2+)-binding site is contributed by Cys-75. The Mg(2+) site is built by Asp-76 and Asp-78. Positions 92 and 99 each coordinate Zn(2+).

The protein belongs to the PRA-CH family. As to quaternary structure, homodimer. Requires Mg(2+) as cofactor. It depends on Zn(2+) as a cofactor.

The protein resides in the cytoplasm. It carries out the reaction 1-(5-phospho-beta-D-ribosyl)-5'-AMP + H2O = 1-(5-phospho-beta-D-ribosyl)-5-[(5-phospho-beta-D-ribosylamino)methylideneamino]imidazole-4-carboxamide. The protein operates within amino-acid biosynthesis; L-histidine biosynthesis; L-histidine from 5-phospho-alpha-D-ribose 1-diphosphate: step 3/9. Its function is as follows. Catalyzes the hydrolysis of the adenine ring of phosphoribosyl-AMP. The polypeptide is Phosphoribosyl-AMP cyclohydrolase (Geobacter metallireducens (strain ATCC 53774 / DSM 7210 / GS-15)).